Here is a 99-residue protein sequence, read N- to C-terminus: uncharacterized protein (99 aa).

This is an uncharacterized protein from Saccharolobus islandicus (Sulfolobus islandicus).